Reading from the N-terminus, the 889-residue chain is DNA gyrase subunit A (889 aa).

The Topo IIA-type catalytic domain maps to 35 to 501 (LPDVRDGLKP…GFEDLEDEDL (467 aa)). Tyr123 serves as the catalytic O-(5'-phospho-DNA)-tyrosine intermediate. The GyrA-box signature appears at 528 to 534 (QNRGGRG). Residues 811-889 (KEDAEDETNE…IQQSLDEDEE (79 aa)) form a disordered region. Residues 813–823 (DAEDETNEDEQ) show a composition bias toward acidic residues. Over residues 863–875 (DGRIEVRQDFMDR) the composition is skewed to basic and acidic residues. Acidic residues predominate over residues 876–889 (VEEDIQQSLDEDEE).

It belongs to the type II topoisomerase GyrA/ParC subunit family. Heterotetramer, composed of two GyrA and two GyrB chains. In the heterotetramer, GyrA contains the active site tyrosine that forms a transient covalent intermediate with DNA, while GyrB binds cofactors and catalyzes ATP hydrolysis.

The protein localises to the cytoplasm. It carries out the reaction ATP-dependent breakage, passage and rejoining of double-stranded DNA.. Functionally, a type II topoisomerase that negatively supercoils closed circular double-stranded (ds) DNA in an ATP-dependent manner to modulate DNA topology and maintain chromosomes in an underwound state. Negative supercoiling favors strand separation, and DNA replication, transcription, recombination and repair, all of which involve strand separation. Also able to catalyze the interconversion of other topological isomers of dsDNA rings, including catenanes and knotted rings. Type II topoisomerases break and join 2 DNA strands simultaneously in an ATP-dependent manner. This is DNA gyrase subunit A from Staphylococcus aureus.